The following is a 1370-amino-acid chain: DNA polymerase II large subunit (1370 aa).

2 disordered regions span residues 279–317 and 1041–1081; these read IGADDADEDTPDAGSDSDATDEGDAPSASTDAEEPPRAA and AGDA…DGGS.

The protein belongs to the archaeal DNA polymerase II family. Heterodimer of a large subunit and a small subunit. In terms of processing, this protein undergoes a protein self splicing that involves a post-translational excision of the intervening region (intein) followed by peptide ligation.

The catalysed reaction is DNA(n) + a 2'-deoxyribonucleoside 5'-triphosphate = DNA(n+1) + diphosphate. It carries out the reaction Exonucleolytic cleavage in the 3'- to 5'-direction to yield nucleoside 5'-phosphates.. Possesses two activities: a DNA synthesis (polymerase) and an exonucleolytic activity that degrades single-stranded DNA in the 3'- to 5'-direction. Has a template-primer preference which is characteristic of a replicative DNA polymerase. The protein is DNA polymerase II large subunit (polC) of Halobacterium salinarum (strain ATCC 700922 / JCM 11081 / NRC-1) (Halobacterium halobium).